We begin with the raw amino-acid sequence, 150 residues long: Ribosomal RNA large subunit methyltransferase H (150 aa).

Residues Ala-100 and 118–123 (LSEMTF) each bind S-adenosyl-L-methionine.

The protein belongs to the RNA methyltransferase RlmH family. In terms of assembly, homodimer.

The protein resides in the cytoplasm. It carries out the reaction pseudouridine(1915) in 23S rRNA + S-adenosyl-L-methionine = N(3)-methylpseudouridine(1915) in 23S rRNA + S-adenosyl-L-homocysteine + H(+). Functionally, specifically methylates the pseudouridine at position 1915 (m3Psi1915) in 23S rRNA. In Helicobacter pylori (strain Shi470), this protein is Ribosomal RNA large subunit methyltransferase H.